Here is a 236-residue protein sequence, read N- to C-terminus: Phosphoribosylaminoimidazole-succinocarboxamide synthase (236 aa).

It belongs to the SAICAR synthetase family.

It carries out the reaction 5-amino-1-(5-phospho-D-ribosyl)imidazole-4-carboxylate + L-aspartate + ATP = (2S)-2-[5-amino-1-(5-phospho-beta-D-ribosyl)imidazole-4-carboxamido]succinate + ADP + phosphate + 2 H(+). It functions in the pathway purine metabolism; IMP biosynthesis via de novo pathway; 5-amino-1-(5-phospho-D-ribosyl)imidazole-4-carboxamide from 5-amino-1-(5-phospho-D-ribosyl)imidazole-4-carboxylate: step 1/2. The polypeptide is Phosphoribosylaminoimidazole-succinocarboxamide synthase (Rickettsia africae (strain ESF-5)).